The primary structure comprises 54 residues: UPF0181 protein APJL_0874 (54 aa).

Belongs to the UPF0181 family.

This Actinobacillus pleuropneumoniae serotype 3 (strain JL03) protein is UPF0181 protein APJL_0874.